The following is a 945-amino-acid chain: Netrin receptor UNC5B (945 aa).

A signal peptide spans 1 to 26 (MRARSGARGALLLALLLCWDPTPSLA). Residues 27–377 (GIDSGGQALP…LEPSGDVALY (351 aa)) are Extracellular-facing. In terms of domain architecture, Ig-like spans 48–145 (PHFLLEPEDA…SGTTKSRRAY (98 aa)). 9 disulfides stabilise this stretch: C69–C130, C81–C128, C174–C225, C258–C295, C262–C299, C273–C285, C314–C348, C318–C353, and C326–C338. The region spanning 153 to 242 (KNFDQEPLAK…KRRSTTATVI (90 aa)) is the Ig-like C2-type domain. N222 is a glycosylation site (N-linked (GlcNAc...) asparagine). 2 TSP type-1 domains span residues 246–300 (NGGW…TVCP) and 302–354 (DGAW…GLCV). N347 carries an N-linked (GlcNAc...) asparagine glycan. The chain crosses the membrane as a helical span at residues 378-398 (AGLVVAVFVVLAVLMAVGVIV). At 399 to 945 (YRRNCRDFDT…LVAMTTDGDC (547 aa)) the chain is on the cytoplasmic side. C403 carries S-palmitoyl cysteine lipidation. One can recognise a ZU5 domain in the interval 543 to 686 (SSVSGTFGCL…LGTYVFTGES (144 aa)). Y581 is modified (phosphotyrosine). Residues 689–838 (RSAVKRLQLA…AETPAGSLDA (150 aa)) are UPA domain. The segment at 707–725 (SLEYSLRVYCLEDTPAALK) is interaction with DCC. The 79-residue stretch at 865 to 943 (KICNSLDAPN…EMLVAMTTDG (79 aa)) folds into the Death domain.

It belongs to the unc-5 family. As to quaternary structure, interacts with the cytoplasmic part of DCC. Interacts with GNAI2 via its cytoplasmic part. Interacts (via death domain) with DAPK1 (via death domain). Interacts (via extracellular domain) with FLRT3 (via extracellular domain); the interaction is direct. Interacts (via extracellular domain) with FLRT2 and FLRT3 (via extracellular domain), but has higher affinity for FLRT3. Identified in a complex with FLRT3 and ADGRL3; does not interact with ADGRL3 by itself. In terms of processing, phosphorylated on cytoplasmic tyrosine residues. Proteolytically cleaved by caspases during apoptosis. The cleavage does not take place when the receptor is associated with netrin ligand. Its cleavage by caspases is required to induce apoptosis. Post-translationally, palmitoylation is required for pro-apoptotic activity, but not for location at lipid rafts. As to expression, mainly expressed in regions of differentiating neurons. Expressed in the developing sensory ganglia that flank the spinal cord from E12, peaking at E14. Expressed in the roof plate region of the spinal cord from E14.

It is found in the cell membrane. The protein localises to the membrane raft. Receptor for netrin required for axon guidance. Mediates axon repulsion of neuronal growth cones in the developing nervous system upon ligand binding. Axon repulsion in growth cones may be caused by its association with DCC that may trigger signaling for repulsion. Functions as a netrin receptor that negatively regulates vascular branching during angiogenesis. Mediates retraction of tip cell filopodia on endothelial growth cones in response to netrin. It also acts as a dependence receptor required for apoptosis induction when not associated with netrin ligand. Mediates apoptosis by activating DAPK1. In the absence of NTN1, activates DAPK1 by reducing its autoinhibitory phosphorylation at Ser-308 thereby increasing its catalytic activity. This chain is Netrin receptor UNC5B (Unc5b), found in Rattus norvegicus (Rat).